Consider the following 375-residue polypeptide: ATP phosphoribosyltransferase regulatory subunit (375 aa).

This sequence belongs to the class-II aminoacyl-tRNA synthetase family. HisZ subfamily. In terms of assembly, heteromultimer composed of HisG and HisZ subunits.

It localises to the cytoplasm. The protein operates within amino-acid biosynthesis; L-histidine biosynthesis; L-histidine from 5-phospho-alpha-D-ribose 1-diphosphate: step 1/9. Functionally, required for the first step of histidine biosynthesis. May allow the feedback regulation of ATP phosphoribosyltransferase activity by histidine. This chain is ATP phosphoribosyltransferase regulatory subunit, found in Agrobacterium fabrum (strain C58 / ATCC 33970) (Agrobacterium tumefaciens (strain C58)).